The chain runs to 2603 residues: Squalestatin tetraketide synthase (2603 aa).

Positions 29 to 455 (TIPIAIIGMS…GANAHVILES (427 aa)) constitute a Ketosynthase family 3 (KS3) domain. Residues cysteine 202, histidine 337, and histidine 377 each act as for beta-ketoacyl synthase activity in the active site. A disordered region spans residues 463 to 512 (IANGSGRSNGTGNGHNGANGTTNGHNGTNGTTNGHFDATQATNGHYGTDE). The span at 469–479 (RSNGTGNGHNG) shows a compositional bias: gly residues. Residues 480 to 497 (ANGTTNGHNGTNGTTNGH) are compositionally biased toward low complexity. Residues 608 to 931 (VFTGQGAQWF…PYISCLLRGQ (324 aa)) are malonyl-CoA:ACP transacylase (MAT) domain. An N-terminal hotdog fold region spans residues 1000-1138 (HDLLGSLIVG…GRITIEFDTS (139 aa)). The PKS/mFAS DH domain maps to 1000 to 1314 (HDLLGSLIVG…NQSVGQMAPQ (315 aa)). Positions 1000 to 1314 (HDLLGSLIVG…NQSVGQMAPQ (315 aa)) are dehydratase (DH) domain. Histidine 1032 serves as the catalytic Proton acceptor; for dehydratase activity. The interval 1157 to 1314 (LMRSVDPSNL…NQSVGQMAPQ (158 aa)) is C-terminal hotdog fold. Aspartate 1223 serves as the catalytic Proton donor; for dehydratase activity. The segment at 1465 to 1665 (LYRYYTDAIK…GLDIELRDCD (201 aa)) is methyltransferase (CMet) domain. The interval 1892-2205 (GLIDTLQFSK…AGKHMGKIVI (314 aa)) is enoyl reductase (ER) (ER) domain. The ketoreductase (KR) domain stretch occupies residues 2228 to 2406 (ASYLIVGGLG…AVSIDLGMVQ (179 aa)). The Carrier domain maps to 2516–2593 (EAIDVVGRAI…ALATTVATKS (78 aa)). At serine 2553 the chain carries O-(pantetheine 4'-phosphoryl)serine.

The protein operates within secondary metabolite biosynthesis. Its function is as follows. Highly reducing polyketide synthase (HR-PKS); part of the gene cluster that mediates the biosynthesis of squalestatin S1 (SQS1, also known as zaragozic acid A), a lead compound for the treatment of hyper-cholesterolemia by targeting squalene synthase (SS). Pks1 is responsible for the biosynthesis of the tetraketide sidechain of SQS1. The biosynthesis must involve 3 rounds of chain extension. After the first and second rounds methyl-transfer occurs, and in all rounds of extension the ketoreductase and dehydratase are active. The enoyl reductase and C-MeT are not active in the final round of extension. This chain is Squalestatin tetraketide synthase, found in Phoma sp. (strain C2932).